The sequence spans 132 residues: DNA-entry nuclease inhibitor (132 aa).

This protein is a subunit of a 75 kDa protein complex, which governs binding and entry of donor DNA. The complex is a tetramer of two subunits of the DNA-entry nuclease and two subunits of a competence-specific protein. Only the complex is able to bind ds- and ss-DNA.

Its subcellular location is the cell membrane. In terms of biological role, plays a role in the competence of cells to be transformed. It inhibits the activity of the DNA-entry nuclease. The polypeptide is DNA-entry nuclease inhibitor (nin) (Bacillus subtilis (strain 168)).